The following is a 295-amino-acid chain: Ornithine carbamoyltransferase, catabolic (295 aa).

Residues 49-52 (STRT), Q76, R100, and 127-130 (HPCQ) each bind carbamoyl phosphate. L-ornithine is bound by residues N155, D213, and 217 to 218 (SM). Residues 253-254 (CL) and R281 contribute to the carbamoyl phosphate site.

It belongs to the aspartate/ornithine carbamoyltransferase superfamily. OTCase family. In terms of assembly, homohexamer.

It localises to the cytoplasm. It carries out the reaction carbamoyl phosphate + L-ornithine = L-citrulline + phosphate + H(+). Its pathway is amino-acid degradation; L-arginine degradation via ADI pathway; carbamoyl phosphate from L-arginine: step 2/2. Arginine lead to a slight activation. Inhibited by all nucleotide phosphates. In terms of biological role, reversibly catalyzes the transfer of the carbamoyl group from carbamoyl phosphate (CP) to the N(epsilon) atom of ornithine (ORN) to produce L-citrulline. The chain is Ornithine carbamoyltransferase, catabolic (arcB) from Halobacterium salinarum (strain ATCC 700922 / JCM 11081 / NRC-1) (Halobacterium halobium).